The following is a 491-amino-acid chain: UDP-N-acetylmuramate--L-alanine ligase (491 aa).

126-132 (GTHGKTT) is an ATP binding site.

Belongs to the MurCDEF family.

Its subcellular location is the cytoplasm. It catalyses the reaction UDP-N-acetyl-alpha-D-muramate + L-alanine + ATP = UDP-N-acetyl-alpha-D-muramoyl-L-alanine + ADP + phosphate + H(+). Its pathway is cell wall biogenesis; peptidoglycan biosynthesis. Cell wall formation. The chain is UDP-N-acetylmuramate--L-alanine ligase from Salmonella paratyphi A (strain ATCC 9150 / SARB42).